We begin with the raw amino-acid sequence, 288 residues long: Energy-coupling factor transporter ATP-binding protein EcfA2 (288 aa).

The 241-residue stretch at 3–243 (IVFEAVSHIY…RAELEAIGLG (241 aa)) folds into the ABC transporter domain. 40 to 47 (GPTGSGKS) contacts ATP.

This sequence belongs to the ABC transporter superfamily. Energy-coupling factor EcfA family. As to quaternary structure, forms a stable energy-coupling factor (ECF) transporter complex composed of 2 membrane-embedded substrate-binding proteins (S component), 2 ATP-binding proteins (A component) and 2 transmembrane proteins (T component).

Its subcellular location is the cell membrane. Its function is as follows. ATP-binding (A) component of a common energy-coupling factor (ECF) ABC-transporter complex. Unlike classic ABC transporters this ECF transporter provides the energy necessary to transport a number of different substrates. In Symbiobacterium thermophilum (strain DSM 24528 / JCM 14929 / IAM 14863 / T), this protein is Energy-coupling factor transporter ATP-binding protein EcfA2.